An 833-amino-acid chain; its full sequence is V-type proton ATPase 116 kDa subunit a 4 (833 aa).

Residues 1 to 390 (MASVFRSEEM…DAYGVGSYRE (390 aa)) lie on the Cytoplasmic side of the membrane. The helical transmembrane segment at 391–409 (INPAPYTIITFPFLFAVMF) threads the bilayer. Over 410-411 (GD) the chain is Vacuolar. The helical transmembrane segment at 412–428 (CGHGMVMLMAALWMVLN) threads the bilayer. Over 429–443 (ERHLLAQKSTNEMWN) the chain is Cytoplasmic. Residues 444 to 473 (IFFNGRYLILLMGIFSIYTGLIYNDCFSKS) form a helical membrane-spanning segment. Topologically, residues 474-538 (FNIFGSSWSV…ASNKLTFLNS (65 aa)) are vacuolar. The helical transmembrane segment at 539–558 (YKMKMSVILGIAHMIFGVIL) threads the bilayer. Over 559–576 (SLFNHIYFRRTLNIILQF) the chain is Cytoplasmic. A helical transmembrane segment spans residues 577–597 (IPEMIFMLSLFGYLVFMIIFK). Topologically, residues 598-642 (WCRYDAHTSRKAPSILIHFIGMFLFDYDDSSNAPLYGHQQEVQTF) are vacuolar. A helical membrane pass occupies residues 643–662 (FVIIALVSVPWMLLIKPFVL). At 663–720 (RAKHQKSQLQSFTIHEDAVEGDHSGHSSKKTAGAHGMKDGHEEEFNFGDIFVHQAIHT) the chain is on the cytoplasmic side. Positions 681–700 (VEGDHSGHSSKKTAGAHGMK) are disordered. A helical membrane pass occupies residues 721 to 745 (IEYCLGCISNTASYLRLWALSLAHA). At 746–766 (ELSEVLWTMVMSIGLRLQGWA) the chain is on the vacuolar side. A helical membrane pass occupies residues 767–805 (GLVGVFIIFAVFAVLTVAILLVMEGLSAFLHALRLHWVE). At 806-833 (FQNKFYEGAGSKFSPFSFKHVLEGTAEE) the chain is on the cytoplasmic side.

This sequence belongs to the V-ATPase 116 kDa subunit family. As to quaternary structure, V-ATPase is a heteromultimeric enzyme made up of two complexes: the ATP-hydrolytic V1 complex and the proton translocation V0 complex. The V1 complex consists of three catalytic AB heterodimers that form a heterohexamer, three peripheral stalks each consisting of EG heterodimers, one central rotor including subunits D and F, and the regulatory subunits C and H. The proton translocation complex V0 consists of the proton transport subunit a, a ring of proteolipid subunits c9c'', rotary subunit d, subunits e and f, and the accessory subunits ATP6AP1/Ac45 and ATP6AP2/PRR. Interacts with the V1 complex V-ATPase subunit A ATP6V1A. Interacts with the V0 complex V-ATPase subunit c ATP6V0C. As to expression, specifically expressed in kidney, but not in the heart, brain, spleen, lung, liver, muscle, or testis. Distribution within the kidney appears more widespread than that seen in man. High intensity staining at the surface of intercalated cells, with additional expression in the proximal tubule.

The protein resides in the apical cell membrane. It is found in the basolateral cell membrane. Subunit of the V0 complex of vacuolar(H+)-ATPase (V-ATPase), a multisubunit enzyme composed of a peripheral complex (V1) that hydrolyzes ATP and a membrane integral complex (V0) that translocates protons. V-ATPase is responsible for acidifying and maintaining the pH of intracellular compartments and in some cell types, is targeted to the plasma membrane, where it is responsible for acidifying the extracellular environment. Involved in normal vectorial acid transport into the urine by the kidney. The polypeptide is V-type proton ATPase 116 kDa subunit a 4 (Atp6v0a4) (Mus musculus (Mouse)).